A 326-amino-acid polypeptide reads, in one-letter code: Adenosine receptor A1 (326 aa).

At 1–10 the chain is on the extracellular side; sequence MPPAISAFQA. Residues 11 to 33 traverse the membrane as a helical segment; sequence AYIGIEVLIALVSVPGNVLVIWA. Over 34–46 the chain is Cytoplasmic; that stretch reads VKVNQALRDATFC. Residues 47–69 traverse the membrane as a helical segment; that stretch reads FIVSLAVADVAVGALVIPLAILI. Topologically, residues 70-80 are extracellular; sequence NIGPRTYFHTC. C80 and C169 are oxidised to a cystine. Residues 81 to 102 traverse the membrane as a helical segment; it reads LMVACPVLILTQSSILALLAIA. At 103 to 123 the chain is on the cytoplasmic side; that stretch reads VDRYLRVKIPLRYKTVVTPRR. A helical transmembrane segment spans residues 124–146; the sequence is AAVAIAGCWILSFVVGLTPLFGW. At 147–176 the chain is on the extracellular side; the sequence is NRLGEAQRAWAANGSGGEPVIKCEFEKVIS. A glycan (N-linked (GlcNAc...) asparagine) is linked at N159. A helical transmembrane segment spans residues 177 to 201; the sequence is MEYMVYFNFFVWVLPPLLLMVLIYL. Topologically, residues 202 to 235 are cytoplasmic; that stretch reads EVFYLIRRQLGKKVSASSGDPQKYYGKELKIAKS. The helical transmembrane segment at 236–259 threads the bilayer; sequence LALILFLFALSWLPLHILNCITLF. Residues 260–267 are Extracellular-facing; that stretch reads CPSCRKPS. The helical transmembrane segment at 268–292 threads the bilayer; it reads ILMYIAIFLTHGNSAMNPIVYAFRI. The Cytoplasmic segment spans residues 293–326; the sequence is QKFRVTFLKIWNDHFRCQPTPPVDEDPPEEAPHD. C309 carries the S-palmitoyl cysteine lipid modification.

Belongs to the G-protein coupled receptor 1 family.

It is found in the cell membrane. Functionally, receptor for adenosine. The activity of this receptor is mediated by G proteins which inhibit adenylyl cyclase. In Canis lupus familiaris (Dog), this protein is Adenosine receptor A1 (ADORA1).